The following is a 123-amino-acid chain: Large ribosomal subunit protein bL17 (123 aa).

This sequence belongs to the bacterial ribosomal protein bL17 family. Part of the 50S ribosomal subunit. Contacts protein L32.

The chain is Large ribosomal subunit protein bL17 from Borrelia hermsii (strain HS1 / DAH).